The following is a 34-amino-acid chain: Phospholipase A2 (34 aa).

The active site involves histidine 18. Ca(2+) is bound at residue aspartate 19.

This sequence belongs to the phospholipase A2 family. Group I subfamily. D49 sub-subfamily. It depends on Ca(2+) as a cofactor. Post-translationally, contains 7 disulfide bonds. In terms of tissue distribution, expressed by the venom gland.

It localises to the secreted. It carries out the reaction a 1,2-diacyl-sn-glycero-3-phosphocholine + H2O = a 1-acyl-sn-glycero-3-phosphocholine + a fatty acid + H(+). Snake venom phospholipase A2 (PLA2) that strongly inhibits platelet aggregation and has a strong anticoagulant activity. PLA2 catalyzes the calcium-dependent hydrolysis of the 2-acyl groups in 3-sn-phosphoglycerides. The chain is Phospholipase A2 from Pseudechis papuanus (Papuan black snake).